A 1102-amino-acid polypeptide reads, in one-letter code: MDPIRSRTPSPARELLPGPQPDRVQPTADRGGAPPAGGPLDGLPARRTMSRTRLPSPPAPSPAFSAGSFSDLLRQFDPSLLDTSLLDSMPAVGTPHTAAAPAECDEVQSGLRAADDPPPTVRVAVTARPPRAKPAPRRRAAQPSDASPAAQVDLRTLGYSQQQQEKIKPKVRSTVAQHHEALVGHGFTHAHIVALSQHPAALGTVAVTYQDIIRALPEATHEDIVGVGKQWSGARALEALLTEAGELRGPPLQLDTGQLLKIAKRGGVTAVEAVHAWRNALTGAPLNLTPDQVVAIASNIGGNQALETVQRLLPVLCQAHGLTPDQVVAIASHGGGKQALETVQRLLPVLCQAHGLTPDQVVAIASNIGGKQALATVQRLLPVLCQDHGLTPDQVVAIASHGGGKQALETVQRLLPVLCQDHGLTPDQVVAIASNIGGKQALETVQRLLPVLCQDHGLTPDQVVAIASNIGGKQALETVQRLLPVLCQDHGLTPDQVVAIASNNGGKQALETVQRLLPVLCQTHGLTPDQVVAIANHDGGKQALETVQRLLPVLCQDHGLTPDQVVAIASNIGGKQALATVQRLLPVLCQAHGLTPDQVVAIASHDGGKQALETVQRLLPVLCQDHGLTPDQVVAIASNNGGKQALETVQRLLPVLCQDHGLTPAQVVAIANHGGGKQALETVQRLLPVLCQDHGLTPVQVVAIASNSGGKQALETVQRLLPVLCQDHGLTPVQVVAIASNGGGKQALATVQRLLPVLCQDHGLTPVQVVAIASHDGGKQALETVQRLLPVLCQDHGLTPDQVVAIASNGGKQALESIVAQLSRPDPALAALTNDHLVALACLGGRPALDAVKKGLPHAPELIRRINRRIPERTSHRVADLAHVVRVLGFFQSHSHPAQAFDDAMTQFGMSRHGLAQLFRRVGVTELEARYGTLPPASQRWDRILQASGMKRVKPSPTSAQTPDQASLHAFADSLERDLDAPSPMHEGDQTRASSRKRSRSDRAVTGPSTQQSFEVRVPEQQDALHLPLSWRVKRPRTRIGGGLPDPGTPIAADLAASSTVMWEQDAAPFAGAADDFPAFNEEELAWLMELLPQSGSVGGTI.

2 disordered regions span residues 1–68 (MDPI…SAGS) and 127–151 (ARPP…PAAQ). Residues 130–140 (PRAKPAPRRRA) show a composition bias toward basic residues. Residues 141–151 (AQPSDASPAAQ) are compositionally biased toward low complexity. 15 Core repeat repeats span residues 288-321 (LTPD…QAHG), 322-355 (LTPD…QAHG), 356-389 (LTPD…QDHG), 390-423 (LTPD…QDHG), 424-457 (LTPD…QDHG), 458-491 (LTPD…QDHG), 492-525 (LTPD…QTHG), 526-559 (LTPD…QDHG), 560-593 (LTPD…QAHG), 594-627 (LTPD…QDHG), 628-661 (LTPD…QDHG), 662-695 (LTPA…QDHG), 696-729 (LTPV…QDHG), 730-763 (LTPV…QDHG), and 764-797 (LTPV…QDHG). A Core repeat 15.5 repeat occupies 798–809 (LTPDQVVAIASN). The Nuclear localization sequence A (NLSA) motif lies at 951 to 954 (KRVK). Residues 978 to 990 (DLDAPSPMHEGDQ) show a composition bias toward basic and acidic residues. The disordered stretch occupies residues 978–1021 (DLDAPSPMHEGDQTRASSRKRSRSDRAVTGPSTQQSFEVRVPEQ). A Nuclear localization sequence B (NLSB) motif is present at residues 997 to 1000 (KRSR). Residues 1034 to 1037 (KRPR) carry the Nuclear localization sequence C (NLSC) motif. The segment at 1063-1093 (WEQDAAPFAGAADDFPAFNEEELAWLMELLP) is activation domain.

It belongs to the transcription activator-like effector (TALE) family.

It localises to the secreted. It is found in the host nucleus. Its function is as follows. Avirulence protein. Induces the hypersensitive response (HR)in rice plants carrying the resistance gene Xa10. Activity depends on the presence of the core repeat domains; replacement with repeat domains from other proteins (AvrBs3 of X.euvesicatoria (AC P14727) or AvrXa7 of this organism) does not elicit the HR. Probably acts as a transcription factor in its host plant (rice) to induce plant resistance or disease. The polypeptide is Avirulence protein AvrXa10 (Xanthomonas oryzae pv. oryzae).